We begin with the raw amino-acid sequence, 408 residues long: Multidrug resistance protein MdtG (408 aa).

A run of 11 helical transmembrane segments spans residues Leu-16–Phe-36, Ile-58–Ala-78, Leu-92–Ile-112, Ala-115–Val-135, Thr-146–Ala-166, Pro-173–Ile-193, Leu-224–Leu-244, Val-256–Pro-276, Ile-290–Thr-310, Phe-319–Asn-339, and Ala-378–Leu-398.

Belongs to the major facilitator superfamily. DHA1 family. MdtG (TC 2.A.1.2.20) subfamily.

The protein resides in the cell inner membrane. In terms of biological role, confers resistance to fosfomycin and deoxycholate. This chain is Multidrug resistance protein MdtG, found in Escherichia coli O139:H28 (strain E24377A / ETEC).